Reading from the N-terminus, the 476-residue chain is ATP synthase subunit beta (476 aa).

ATP is bound at residue 154-161; that stretch reads GGAGVGKT.

This sequence belongs to the ATPase alpha/beta chains family. F-type ATPases have 2 components, CF(1) - the catalytic core - and CF(0) - the membrane proton channel. CF(1) has five subunits: alpha(3), beta(3), gamma(1), delta(1), epsilon(1). CF(0) has four main subunits: a(1), b(1), b'(1) and c(9-12).

Its subcellular location is the cell inner membrane. The enzyme catalyses ATP + H2O + 4 H(+)(in) = ADP + phosphate + 5 H(+)(out). Produces ATP from ADP in the presence of a proton gradient across the membrane. The catalytic sites are hosted primarily by the beta subunits. This is ATP synthase subunit beta from Rhodopseudomonas palustris (strain BisA53).